The primary structure comprises 1016 residues: Kinesin-like protein KIN-14K (1016 aa).

The Calponin-homology (CH) domain occupies 14–121; it reads ADRRAEVIEW…CLLVLRESVS (108 aa). The disordered stretch occupies residues 123-176; it reads GLRDGTSKAPLRKKWRVPETGEPLVPGVAQGKTSPGEDKRNGLPDPKSQQKTPI. Residues 288–354 are a coiled coil; it reads VNGTNEENQM…EVMTSMHEQQ (67 aa). A Kinesin motor domain is found at 481 to 808; sequence NIRVYCRVRP…LKFAERVSGV (328 aa). ATP is bound at residue 565 to 572; that stretch reads GQTGSGKT. Residues 820 to 852 adopt a coiled-coil conformation; the sequence is KDIKELLEQVASLKDTIVRKDTEIEQLQLMKDK. Composition is skewed to polar residues over residues 884 to 893 and 990 to 1004; these read NQQSQLSDPQ and KTPNQTRVQSSQLIG. Disordered regions lie at residues 884 to 912 and 971 to 1016; these read NQQSQLSDPQSYAEVNRDGGPTSYTDITP and LTKN…RWQK.

The protein belongs to the TRAFAC class myosin-kinesin ATPase superfamily. Kinesin family. KIN-14 subfamily.

This is Kinesin-like protein KIN-14K from Oryza sativa subsp. japonica (Rice).